A 274-amino-acid polypeptide reads, in one-letter code: MTPEQSPLGKPSAYTEQYDASLLFPIARKNAREAIGIGAQLPFFGTDIWNAYELSWLNARGKPQIAVATFFVPADSPNIVESKSFKLYLGSFAQTAFESMETVRDTIKRDVSASCGATVSVHLTAPYEFGKLQMEEFEGLSLDRLDLDTDVYHPDASLLTAALDEAPVEETLVSNLLKSNCPVTGQPDWGSVQIHYVGPQIDHAGLLRYIISYRNHTGFHEQCVEKIFLDVLKACKPVKLAVYARYTRRGGLDINPFRTNYNLPMPDNMRLARQ.

Residue 80–82 (VES) participates in substrate binding. An NADPH-binding site is contributed by 82–83 (SK). The active-site Thioimide intermediate is the Cys181. Asp188 (proton donor) is an active-site residue. A substrate-binding site is contributed by 220–221 (HE). 249-250 (RG) lines the NADPH pocket.

This sequence belongs to the GTP cyclohydrolase I family. QueF type 2 subfamily. As to quaternary structure, homodimer.

Its subcellular location is the cytoplasm. It carries out the reaction 7-aminomethyl-7-carbaguanine + 2 NADP(+) = 7-cyano-7-deazaguanine + 2 NADPH + 3 H(+). It participates in tRNA modification; tRNA-queuosine biosynthesis. Catalyzes the NADPH-dependent reduction of 7-cyano-7-deazaguanine (preQ0) to 7-aminomethyl-7-deazaguanine (preQ1). This chain is NADPH-dependent 7-cyano-7-deazaguanine reductase, found in Paraburkholderia phytofirmans (strain DSM 17436 / LMG 22146 / PsJN) (Burkholderia phytofirmans).